The sequence spans 295 residues: MQTYLQKYWNYLRNERQVSSYTLTNYQRQMDAVMKILQENDIQNWRQVSPSVVRFILAQSKKSGLHEKSLALRLSALRQFLAFLVLQGELKVNPAIGISAPKQGKHLPKNINAEQLNKLLDNNSKEPIDLRDKAMLELMYSSGLRLSELQGLNLTSLNFRSREIRVLGKGNKERILPFGRHASHSVQEWLKVRLLFNPKDDALFVSSLGNRMSNRSIQKRMEIWGVRQGLNSHLNPHKLRHSFATQMLEASSDLRAVQELLGHSNLSTTQIYTHLNFQHLAEVYDQAHPRAKRRK.

The Core-binding (CB) domain occupies 1–85 (MQTYLQKYWN…ALRQFLAFLV (85 aa)). The Tyr recombinase domain occupies 106–285 (HLPKNINAEQ…NFQHLAEVYD (180 aa)). Active-site residues include Arg145, Lys169, His237, Arg240, and His263. Tyr272 functions as the O-(3'-phospho-DNA)-tyrosine intermediate in the catalytic mechanism.

This sequence belongs to the 'phage' integrase family. XerC subfamily. In terms of assembly, forms a cyclic heterotetrameric complex composed of two molecules of XerC and two molecules of XerD.

It localises to the cytoplasm. In terms of biological role, site-specific tyrosine recombinase, which acts by catalyzing the cutting and rejoining of the recombining DNA molecules. The XerC-XerD complex is essential to convert dimers of the bacterial chromosome into monomers to permit their segregation at cell division. It also contributes to the segregational stability of plasmids. The sequence is that of Tyrosine recombinase XerC from Mannheimia succiniciproducens (strain KCTC 0769BP / MBEL55E).